The primary structure comprises 215 residues: MADS-box transcription factor 4 (215 aa).

The MADS-box domain maps to 1 to 61 (MGRGKIEIKR…GKLSDYCTPK (61 aa)). Positions 89-175 (HKSLSAEIDR…AFRVHQQEVE (87 aa)) constitute a K-box domain.

May interact with the K-box of MADS16. Highly expressed in lodicules, at intermediate levels in stamens, and weakly in carpels. Expressed in pollen.

It is found in the nucleus. Probable transcription factor involved in the development of floral organs. B-class protein required for normal development of lodicules and stamens (whorls 2 and 3). May function as a heterodimer with MADS16. In Oryza sativa subsp. japonica (Rice), this protein is MADS-box transcription factor 4 (MADS4).